Here is a 498-residue protein sequence, read N- to C-terminus: MELLTFRDVTIEFSLEEWEFLNPAQQSLYRKVMLENYRNLVSLGLTVSKPELISRLEQRQEPWNVKRHETIAKPPAMSSHYTEDLLPEQCMQDSFQKVILRRYGSCGLEDLHLRKDGENVGECKDQKEIYNGLNQCLSTLPSKIFPYNKCVKVFSKSSNLNRENIRHTTEKLFKCMQCGKVFKSHSGLSYHKIIHTEEKLCICEECGKTFKWFSYLTKHKRIHTGEKPYKCEECGKAFNWCSSLTKHKRIHTGEKPYKCEECGKAFHWCSPFVRHKKIHTGEKPYTCEDCGRAFNRHSHLTKHKTIHTGKKPYKCKECGKAFNHCSLLTIHERTHTGEKPYKCEECGKAFNSSSILTEHKVIHSGEKPYKCEKCDKVFKRFSYLTKHKRIHTGEKPYKCEECGKAFNWSSILTEHKRIHTGEKPYNCEECGKAFNRCSHLTRHKKIHTAVKRYKCEECGKAFKRCSHLNEHKRVQRGEKSCKYKKCGEAFNHCSNLTT.

In terms of domain architecture, KRAB spans 4–75 (LTFRDVTIEF…KRHETIAKPP (72 aa)). C2H2-type zinc fingers lie at residues 173-195 (FKCMQCGKVFKSHSGLSYHKIIH), 201-223 (CICEECGKTFKWFSYLTKHKRIH), 229-251 (YKCEECGKAFNWCSSLTKHKRIH), 257-279 (YKCEECGKAFHWCSPFVRHKKIH), 285-307 (YTCEDCGRAFNRHSHLTKHKTIH), 313-335 (YKCKECGKAFNHCSLLTIHERTH), 341-363 (YKCEECGKAFNSSSILTEHKVIH), 369-391 (YKCEKCDKVFKRFSYLTKHKRIH), 397-419 (YKCEECGKAFNWSSILTEHKRIH), and 425-447 (YNCEECGKAFNRCSHLTRHKKIH). The segment at 453–475 (YKCEECGKAFKRCSHLNEHKRVQ) adopts a C2H2-type 11; degenerate zinc-finger fold.

It belongs to the krueppel C2H2-type zinc-finger protein family.

The protein localises to the nucleus. Functionally, may be involved in transcriptional regulation. The polypeptide is Zinc finger protein 682 (ZNF682) (Homo sapiens (Human)).